The chain runs to 127 residues: RxLR effector protein CRE6 (127 aa).

The first 19 residues, 1–19 (MIRNALLVLVFVLIGTISA), serve as a signal peptide directing secretion. A RxLR-dEER motif is present at residues 48 to 67 (RLLRQGSVKEGGVHDATEER).

The protein belongs to the RxLR effector family.

The protein resides in the secreted. The protein localises to the host cell. Functionally, effector that is involved in host plant infection. Contributes to virulence during the early infection stage, by inhibiting plant defense responses induced by both PAMP-triggered immunity (PTI) and effector-triggered immunity (ETI). The sequence is that of RxLR effector protein CRE6 from Phytophthora infestans (strain T30-4) (Potato late blight agent).